Consider the following 249-residue polypeptide: Proteasome subunit alpha (249 aa).

The interval 229 to 249 is disordered; sequence EAREAEEAAEAQSSEDGGATD.

Belongs to the peptidase T1A family. As to quaternary structure, the 20S proteasome core is composed of 14 alpha and 14 beta subunits that assemble into four stacked heptameric rings, resulting in a barrel-shaped structure. The two inner rings, each composed of seven catalytic beta subunits, are sandwiched by two outer rings, each composed of seven alpha subunits. The catalytic chamber with the active sites is on the inside of the barrel. Has a gated structure, the ends of the cylinder being occluded by the N-termini of the alpha-subunits. Is capped by the proteasome-associated ATPase, ARC.

It localises to the cytoplasm. Its pathway is protein degradation; proteasomal Pup-dependent pathway. Its activity is regulated as follows. The formation of the proteasomal ATPase ARC-20S proteasome complex, likely via the docking of the C-termini of ARC into the intersubunit pockets in the alpha-rings, may trigger opening of the gate for substrate entry. Interconversion between the open-gate and close-gate conformations leads to a dynamic regulation of the 20S proteasome proteolysis activity. Its function is as follows. Component of the proteasome core, a large protease complex with broad specificity involved in protein degradation. This chain is Proteasome subunit alpha, found in Thermobifida fusca (strain YX).